The following is a 619-amino-acid chain: UPF0329 protein ECU08_2070 (619 aa).

Composition is skewed to basic and acidic residues over residues Glu-350–Gly-359 and Gly-369–Glu-385. Positions Glu-350 to His-425 are disordered. The segment covering Glu-386 to Ala-396 has biased composition (acidic residues).

Belongs to the UPF0329 family.

The protein is UPF0329 protein ECU08_2070 of Encephalitozoon cuniculi (strain GB-M1) (Microsporidian parasite).